We begin with the raw amino-acid sequence, 208 residues long: Claudin-like protein ZF-A89 (208 aa).

Transmembrane regions (helical) follow at residues 8-28, 82-102, 117-137, and 160-180; these read LLATVLAIIGWLGEIVICALP, ALVVISIIVTFMGVFLTIAGG, VVVAAGVFFLVGGILCLIPVC, and LGASLFIGWCASGLLLLGGAL.

The protein belongs to the claudin family.

It localises to the cell membrane. Its subcellular location is the cell junction. The protein resides in the tight junction. In terms of biological role, component of tight junction (TJ) strands. This Danio rerio (Zebrafish) protein is Claudin-like protein ZF-A89 (cldnd).